We begin with the raw amino-acid sequence, 64 residues long: Large ribosomal subunit protein bL35 (64 aa).

The disordered stretch occupies residues 1–54 (MPKIKSNSGAAKRFKKTAHGFKHKQSFRSHILTKKSTKRKRQLRGMKQIHDADK). Basic residues predominate over residues 12–44 (KRFKKTAHGFKHKQSFRSHILTKKSTKRKRQLR).

It belongs to the bacterial ribosomal protein bL35 family.

In Chromohalobacter salexigens (strain ATCC BAA-138 / DSM 3043 / CIP 106854 / NCIMB 13768 / 1H11), this protein is Large ribosomal subunit protein bL35.